The following is a 285-amino-acid chain: Glutamate racemase (285 aa).

Substrate is bound by residues 28–29 (DS) and 60–61 (YG). Cysteine 92 serves as the catalytic Proton donor/acceptor. Residue 93 to 94 (NT) coordinates substrate. Cysteine 204 (proton donor/acceptor) is an active-site residue. Position 205-206 (205-206 (TH)) interacts with substrate.

This sequence belongs to the aspartate/glutamate racemases family.

The enzyme catalyses L-glutamate = D-glutamate. The protein operates within cell wall biogenesis; peptidoglycan biosynthesis. Provides the (R)-glutamate required for cell wall biosynthesis. The polypeptide is Glutamate racemase (Shigella flexneri serotype 5b (strain 8401)).